We begin with the raw amino-acid sequence, 230 residues long: 7-cyano-7-deazaguanine synthase (230 aa).

Position 8–18 (8–18 (LSGGMDSAVVT)) interacts with ATP. Positions 186, 196, 199, and 202 each coordinate Zn(2+).

The protein belongs to the QueC family. Zn(2+) serves as cofactor.

The enzyme catalyses 7-carboxy-7-deazaguanine + NH4(+) + ATP = 7-cyano-7-deazaguanine + ADP + phosphate + H2O + H(+). It functions in the pathway purine metabolism; 7-cyano-7-deazaguanine biosynthesis. Catalyzes the ATP-dependent conversion of 7-carboxy-7-deazaguanine (CDG) to 7-cyano-7-deazaguanine (preQ(0)). The chain is 7-cyano-7-deazaguanine synthase from Xylella fastidiosa (strain 9a5c).